The sequence spans 184 residues: ATP-dependent protease subunit HslV (184 aa).

Residue T12 is part of the active site. Na(+) is bound by residues G167, C170, and T173.

Belongs to the peptidase T1B family. HslV subfamily. A double ring-shaped homohexamer of HslV is capped on each side by a ring-shaped HslU homohexamer. The assembly of the HslU/HslV complex is dependent on binding of ATP.

The protein localises to the cytoplasm. It catalyses the reaction ATP-dependent cleavage of peptide bonds with broad specificity.. Allosterically activated by HslU binding. Its function is as follows. Protease subunit of a proteasome-like degradation complex believed to be a general protein degrading machinery. The protein is ATP-dependent protease subunit HslV of Wolbachia sp. subsp. Drosophila simulans (strain wRi).